The following is a 151-amino-acid chain: MRTYDFSPLWRSTIGFDRLFDLVETAQRAGEDNYPPYNIERVSEDRYQISLAIAGFSPDEVSVTAEQNAVIVEGNKADKAEREYLYRGISARPFKRQFNLADYVQVQSAAFENGLLKIELIREIPEAMKPRRIAINAAPSGTVHQLEGRAA.

The region spanning 28–138 (RAGEDNYPPY…KPRRIAINAA (111 aa)) is the sHSP domain.

This sequence belongs to the small heat shock protein (HSP20) family.

The polypeptide is Small heat shock protein HspH (hspH) (Bradyrhizobium diazoefficiens (strain JCM 10833 / BCRC 13528 / IAM 13628 / NBRC 14792 / USDA 110)).